The sequence spans 73 residues: ATP synthase subunit 9, mitochondrial (73 aa).

2 consecutive transmembrane segments (helical) span residues 12–32 and 50–70; these read VAALGLIGAGIGVGIVFAALI and ILGFALSEATGLFALMVSFLL.

The protein belongs to the ATPase C chain family. F-type ATPases have 2 components, CF(1) - the catalytic core - and CF(0) - the membrane proton channel. CF(1) has five subunits: alpha(3), beta(3), gamma(1), delta(1), epsilon(1). CF(0) has three main subunits: a, b and c.

Its subcellular location is the mitochondrion inner membrane. Its function is as follows. Mitochondrial membrane ATP synthase (F(1)F(0) ATP synthase or Complex V) produces ATP from ADP in the presence of a proton gradient across the membrane which is generated by electron transport complexes of the respiratory chain. F-type ATPases consist of two structural domains, F(1) - containing the extramembraneous catalytic core and F(0) - containing the membrane proton channel, linked together by a central stalk and a peripheral stalk. During catalysis, ATP synthesis in the catalytic domain of F(1) is coupled via a rotary mechanism of the central stalk subunits to proton translocation. Part of the complex F(0) domain. A homomeric c-ring of probably 10 subunits is part of the complex rotary element. The protein is ATP synthase subunit 9, mitochondrial (ATP9) of Mycosarcoma maydis (Corn smut fungus).